We begin with the raw amino-acid sequence, 239 residues long: DNA repair protein RecO (239 aa).

It belongs to the RecO family.

Functionally, involved in DNA repair and RecF pathway recombination. This is DNA repair protein RecO from Cereibacter sphaeroides (strain ATCC 17029 / ATH 2.4.9) (Rhodobacter sphaeroides).